Here is a 135-residue protein sequence, read N- to C-terminus: NADPH-dependent 7-cyano-7-deazaguanine reductase (135 aa).

Cysteine 48 (thioimide intermediate) is an active-site residue. The active-site Proton donor is aspartate 55. Residues 70–72 and 89–90 each bind substrate; these read IEL and HE.

It belongs to the GTP cyclohydrolase I family. QueF type 1 subfamily.

It is found in the cytoplasm. It catalyses the reaction 7-aminomethyl-7-carbaguanine + 2 NADP(+) = 7-cyano-7-deazaguanine + 2 NADPH + 3 H(+). It functions in the pathway tRNA modification; tRNA-queuosine biosynthesis. In terms of biological role, catalyzes the NADPH-dependent reduction of 7-cyano-7-deazaguanine (preQ0) to 7-aminomethyl-7-deazaguanine (preQ1). The polypeptide is NADPH-dependent 7-cyano-7-deazaguanine reductase (Prochlorococcus marinus (strain MIT 9303)).